A 380-amino-acid polypeptide reads, in one-letter code: Putative 8-amino-7-oxononanoate synthase (380 aa).

A substrate-binding site is contributed by Arg18. 106–107 (GY) contacts pyridoxal 5'-phosphate. His131 contributes to the substrate binding site. Residues Ser179, 205–208 (DEAH), and 236–239 (TFGK) contribute to the pyridoxal 5'-phosphate site. The residue at position 239 (Lys239) is an N6-(pyridoxal phosphate)lysine. Thr352 is a substrate binding site.

It belongs to the class-II pyridoxal-phosphate-dependent aminotransferase family. BioF subfamily. Homodimer. Pyridoxal 5'-phosphate is required as a cofactor.

The enzyme catalyses 6-carboxyhexanoyl-[ACP] + L-alanine + H(+) = (8S)-8-amino-7-oxononanoate + holo-[ACP] + CO2. It functions in the pathway cofactor biosynthesis; biotin biosynthesis. Functionally, catalyzes the decarboxylative condensation of pimeloyl-[acyl-carrier protein] and L-alanine to produce 8-amino-7-oxononanoate (AON), [acyl-carrier protein], and carbon dioxide. The protein is Putative 8-amino-7-oxononanoate synthase (bioF) of Neisseria meningitidis serogroup C / serotype 2a (strain ATCC 700532 / DSM 15464 / FAM18).